The chain runs to 97 residues: YcgL domain-containing protein PputW619_3899 (97 aa).

Positions 3 to 87 (RICSIYKSPR…AEDEYIEHLP (85 aa)) constitute a YcgL domain.

The protein is YcgL domain-containing protein PputW619_3899 of Pseudomonas putida (strain W619).